We begin with the raw amino-acid sequence, 171 residues long: S-ribosylhomocysteine lyase (171 aa).

Positions 54, 58, and 128 each coordinate Fe cation.

Belongs to the LuxS family. Homodimer. Fe cation serves as cofactor.

The enzyme catalyses S-(5-deoxy-D-ribos-5-yl)-L-homocysteine = (S)-4,5-dihydroxypentane-2,3-dione + L-homocysteine. Involved in the synthesis of autoinducer 2 (AI-2) which is secreted by bacteria and is used to communicate both the cell density and the metabolic potential of the environment. The regulation of gene expression in response to changes in cell density is called quorum sensing. Catalyzes the transformation of S-ribosylhomocysteine (RHC) to homocysteine (HC) and 4,5-dihydroxy-2,3-pentadione (DPD). The chain is S-ribosylhomocysteine lyase from Proteus mirabilis (strain HI4320).